The sequence spans 136 residues: Sec-independent protein translocase protein TatB (136 aa).

The helical transmembrane segment at 1–21 (MFDIGFPELALVAVIGLLVLG) threads the bilayer. The segment at 89–136 (YEDMVEKNPATPMSSKASTPQTPSSGPDPQPVESHSHSDDASKQHDRS) is disordered. Residues 99 to 115 (TPMSSKASTPQTPSSGP) show a composition bias toward polar residues. Residues 122 to 136 (SHSHSDDASKQHDRS) are compositionally biased toward basic and acidic residues.

This sequence belongs to the TatB family. As to quaternary structure, the Tat system comprises two distinct complexes: a TatABC complex, containing multiple copies of TatA, TatB and TatC subunits, and a separate TatA complex, containing only TatA subunits. Substrates initially bind to the TatABC complex, which probably triggers association of the separate TatA complex to form the active translocon.

The protein localises to the cell inner membrane. Part of the twin-arginine translocation (Tat) system that transports large folded proteins containing a characteristic twin-arginine motif in their signal peptide across membranes. Together with TatC, TatB is part of a receptor directly interacting with Tat signal peptides. TatB may form an oligomeric binding site that transiently accommodates folded Tat precursor proteins before their translocation. The sequence is that of Sec-independent protein translocase protein TatB from Hahella chejuensis (strain KCTC 2396).